The primary structure comprises 368 residues: 3-dehydroquinate synthase (368 aa).

NAD(+) is bound by residues 69 to 74 (DGEAYK), 103 to 107 (GVIGD), 127 to 128 (TT), K140, and K149. Residues E182, H245, and H262 each coordinate Zn(2+).

Belongs to the sugar phosphate cyclases superfamily. Dehydroquinate synthase family. NAD(+) serves as cofactor. It depends on Co(2+) as a cofactor. The cofactor is Zn(2+).

It localises to the cytoplasm. It catalyses the reaction 7-phospho-2-dehydro-3-deoxy-D-arabino-heptonate = 3-dehydroquinate + phosphate. Its pathway is metabolic intermediate biosynthesis; chorismate biosynthesis; chorismate from D-erythrose 4-phosphate and phosphoenolpyruvate: step 2/7. In terms of biological role, catalyzes the conversion of 3-deoxy-D-arabino-heptulosonate 7-phosphate (DAHP) to dehydroquinate (DHQ). This Pseudomonas aeruginosa (strain ATCC 15692 / DSM 22644 / CIP 104116 / JCM 14847 / LMG 12228 / 1C / PRS 101 / PAO1) protein is 3-dehydroquinate synthase.